Here is a 501-residue protein sequence, read N- to C-terminus: Glucose-6-phosphate exchanger SLC37A2 (501 aa).

The helical transmembrane segment at 19-39 (SWFRGLILLLTFLIYACYHMS) threads the bilayer. Residues Asn53, Asn62, and Asn68 are each glycosylated (N-linked (GlcNAc...) asparagine). Transmembrane regions (helical) follow at residues 88-108 (GGVD…SGVF), 118-138 (LSAG…GYFW), 145-165 (YFVV…PSVV), 189-209 (SVGN…QWGL), and 210-230 (SFIV…LFLI). The segment at 240–262 (PPQHHGEPAENQDNPEDPGNSPC) is disordered. The next 6 helical transmembrane spans lie at 302-322 (LCLL…PLYI), 334-354 (GDLS…AGLV), 362-382 (ATTC…YNYI), 391-411 (IVML…ITTA), 434-454 (AIID…AGLI), and 462-482 (VFYM…RLVY).

This sequence belongs to the major facilitator superfamily. Organophosphate:Pi antiporter (OPA) (TC 2.A.1.4) family. In terms of tissue distribution, detected in intestine and pancreas. Lower expression is also detected in liver and kidney.

Its subcellular location is the endoplasmic reticulum membrane. It catalyses the reaction D-glucose 6-phosphate(in) + phosphate(out) = D-glucose 6-phosphate(out) + phosphate(in). Inhibited by vanadate but not by chlorogenic acid. Inorganic phosphate and glucose-6-phosphate antiporter. May transport cytoplasmic glucose-6-phosphate into the lumen of the endoplasmic reticulum and translocate inorganic phosphate into the opposite direction. Independent of a lumenal glucose-6-phosphatase. May not play a role in homeostatic regulation of blood glucose levels. This chain is Glucose-6-phosphate exchanger SLC37A2, found in Homo sapiens (Human).